A 313-amino-acid polypeptide reads, in one-letter code: Dimethyladenosine transferase (313 aa).

Residues 1-21 (MPKVKSGAIGRRRGRQEQRRE) are disordered. 6 residues coordinate S-adenosyl-L-methionine: H37, L39, G64, E85, D113, and N128.

It belongs to the class I-like SAM-binding methyltransferase superfamily. rRNA adenine N(6)-methyltransferase family. As to quaternary structure, part of the small subunit (SSU) processome, composed of more than 70 proteins and the RNA chaperone small nucleolar RNA (snoRNA) U3.

It is found in the nucleus. Its subcellular location is the nucleoplasm. The protein localises to the nucleolus. The catalysed reaction is adenosine(1779)/adenosine(1780) in 18S rRNA + 4 S-adenosyl-L-methionine = N(6)-dimethyladenosine(1779)/N(6)-dimethyladenosine(1780) in 18S rRNA + 4 S-adenosyl-L-homocysteine + 4 H(+). Functionally, specifically dimethylates two adjacent adenosines in the loop of a conserved hairpin near the 3'-end of 18S rRNA in the 40S particle. Involved in the pre-rRNA processing steps leading to small-subunit rRNA production independently of its RNA-modifying catalytic activity. Part of the small subunit (SSU) processome, first precursor of the small eukaryotic ribosomal subunit. During the assembly of the SSU processome in the nucleolus, many ribosome biogenesis factors, an RNA chaperone and ribosomal proteins associate with the nascent pre-rRNA and work in concert to generate RNA folding, modifications, rearrangements and cleavage as well as targeted degradation of pre-ribosomal RNA by the RNA exosome. The sequence is that of Dimethyladenosine transferase from Homo sapiens (Human).